We begin with the raw amino-acid sequence, 188 residues long: Apolipoprotein M (188 aa).

Residues 1 to 22 (MFHQIWAALLYLYGILLNSIYQ) constitute a signal peptide (not cleaved). Disulfide bonds link Cys-23–Cys-167, Cys-95–Cys-183, and Cys-128–Cys-157. Glu-136 and Arg-143 together coordinate tetradecanoate.

Belongs to the calycin superfamily. Lipocalin family. Highly divergent. Interacts with LRP2; LRP2 mediates APOM renal uptake and subsequent lysosomal degradation.

It localises to the secreted. Probably involved in lipid transport. Can bind sphingosine-1-phosphate, myristic acid, palmitic acid and stearic acid, retinol, all-trans-retinoic acid and 9-cis-retinoic acid. This chain is Apolipoprotein M (APOM), found in Sus scrofa (Pig).